The sequence spans 256 residues: MVSFELNEEEFKILEDLTNDELIALSKFKDFPICKDIKDQYLLLFLFSKKFDLEKAHTLIKNNLLIREKLEISLPVVKNQVNPELAMKSSSFNIIGYRDNNGCSISYLHPSKAKPKDFTLKEYMTFLLWSQDQSAHDHSSVHRNGMTIIEDLHKISIFKHFDSRLQDFLKKNKLNDMQDVFIGRIQKIYILNPPWVLKPLLSLAKTFMKNKLISRIEICKNDQIFTTIDQSKVLFEYGGTLNLTYIDYFNSLPSNF.

A CRAL-TRIO domain is found at 82–245; it reads NPELAMKSSS…EYGGTLNLTY (164 aa).

The protein is CRAL-TRIO domain-containing protein DDB_G0278031 of Dictyostelium discoideum (Social amoeba).